Consider the following 108-residue polypeptide: Putative lipid-binding protein AIR1B (108 aa).

Residues 1–23 (MAPRTSLALFVSLNLLFFTCTSA) form the signal peptide. 3 disulfides stabilise this stretch: Cys28-Cys55, Cys35-Cys54, and Cys71-Cys107.

This sequence belongs to the plant LTP family. PEARLI1 subfamily.

The protein localises to the secreted. This Arabidopsis thaliana (Mouse-ear cress) protein is Putative lipid-binding protein AIR1B (AIR1B).